We begin with the raw amino-acid sequence, 64 residues long: Large ribosomal subunit protein bL35 (64 aa).

The protein belongs to the bacterial ribosomal protein bL35 family.

In Mycoplasmopsis pulmonis (strain UAB CTIP) (Mycoplasma pulmonis), this protein is Large ribosomal subunit protein bL35.